The primary structure comprises 790 residues: LPS-assembly protein LptD (790 aa).

A signal peptide spans 1-20; sequence MRMLRWLILSAFSVAGAVQA.

Belongs to the LptD family. As to quaternary structure, component of the lipopolysaccharide transport and assembly complex. Interacts with LptE and LptA.

It is found in the cell outer membrane. Its function is as follows. Together with LptE, is involved in the assembly of lipopolysaccharide (LPS) at the surface of the outer membrane. This chain is LPS-assembly protein LptD, found in Bordetella bronchiseptica (strain ATCC BAA-588 / NCTC 13252 / RB50) (Alcaligenes bronchisepticus).